Here is a 278-residue protein sequence, read N- to C-terminus: Large ribosomal subunit protein uL2c (278 aa).

A disordered region spans residues 222–241; the sequence is GVVMNPNDHPHGGGEGRSPI.

This sequence belongs to the universal ribosomal protein uL2 family. Part of the 50S ribosomal subunit.

It localises to the plastid. The protein resides in the chloroplast. This chain is Large ribosomal subunit protein uL2c (rpl2), found in Tupiella akineta (Green alga).